The chain runs to 302 residues: ATP synthase gamma chain (302 aa).

Belongs to the ATPase gamma chain family. F-type ATPases have 2 components, CF(1) - the catalytic core - and CF(0) - the membrane proton channel. CF(1) has five subunits: alpha(3), beta(3), gamma(1), delta(1), epsilon(1). CF(0) has three main subunits: a, b and c.

It localises to the cell membrane. In terms of biological role, produces ATP from ADP in the presence of a proton gradient across the membrane. The gamma chain is believed to be important in regulating ATPase activity and the flow of protons through the CF(0) complex. The polypeptide is ATP synthase gamma chain (Kineococcus radiotolerans (strain ATCC BAA-149 / DSM 14245 / SRS30216)).